Reading from the N-terminus, the 213-residue chain is mRNA-decapping protein D9 (213 aa).

The Nudix hydrolase domain maps to 30–209 (KDTHVFAACI…EYLSYIYNML (180 aa)). Positions 111 to 132 (GKLDKKESIKDCLRRELKEESD) match the Nudix box motif. Glu-117 contacts Mg(2+). The active-site Nucleophile is the Glu-126. Mg(2+) is bound by residues Glu-130 and Asp-151.

Belongs to the Nudix hydrolase family. Requires Mg(2+) as cofactor. The cofactor is Mn(2+).

Functionally, decapping enzyme required for the removal of the 5'-end m7GpppN cap tethered to viral and host mRNAs to allow their decay in cells. May therefore accelerate viral and cellular mRNA turnover to eliminate competing host mRNAs and allow stage-specific synthesis of viral proteins. Acceleration of the turnover of cellular transcripts may even promote the shutoff of host protein synthesis. Does not cleave unmethylated RNAs or RNAs shorter than 24 nucleotides. This is mRNA-decapping protein D9 from Homo sapiens (Human).